Here is a 257-residue protein sequence, read N- to C-terminus: Putative phosphatase YkrA (257 aa).

The active-site Nucleophile is aspartate 9. Aspartate 9 is a Mg(2+) binding site. Isoleucine 10 serves as a coordination point for phosphate. Residue aspartate 11 coordinates Mg(2+). Phosphate contacts are provided by residues 43–44 (SG) and lysine 183. Residue aspartate 206 coordinates Mg(2+). Phosphate is bound at residue asparagine 209.

The protein belongs to the HAD-like hydrolase superfamily. Cof family. It depends on Mg(2+) as a cofactor.

The chain is Putative phosphatase YkrA (ykrA) from Bacillus subtilis (strain 168).